Reading from the N-terminus, the 539-residue chain is Transcription factor prr1 (539 aa).

Residues 7–111 mediate DNA binding; that stretch reads SSDFVRKLFN…LLDNIKRKAP (105 aa). Thr221 bears the Phosphothreonine mark. Phosphoserine is present on Ser223. Residues 251–263 are compositionally biased toward polar residues; it reads GTAQPSLYNTPSS. The segment at 251–281 is disordered; that stretch reads GTAQPSLYNTPSSDYELANQEKPADSMASAA. A Response regulatory domain is found at 369-483; sequence RILLVEDDEL…TLLQLLKKQL (115 aa). Asp418 bears the 4-aspartylphosphate mark.

In the N-terminal section; belongs to the HSF family.

Its subcellular location is the nucleus. In terms of biological role, involved in oxidative stress. Transcription factor that acts upon trr1 and ctt1. The sequence is that of Transcription factor prr1 (prr1) from Schizosaccharomyces pombe (strain 972 / ATCC 24843) (Fission yeast).